The following is a 575-amino-acid chain: Phosphoenolpyruvate-protein phosphotransferase (575 aa).

His-191 serves as the catalytic Tele-phosphohistidine intermediate. Residues Arg-298 and Arg-334 each contribute to the phosphoenolpyruvate site. Mg(2+)-binding residues include Glu-435 and Asp-459. Phosphoenolpyruvate-binding positions include 458–459 (ND) and Arg-469. The active-site Proton donor is the Cys-506.

It belongs to the PEP-utilizing enzyme family. In terms of assembly, homodimer. The cofactor is Mg(2+).

Its subcellular location is the cytoplasm. The catalysed reaction is L-histidyl-[protein] + phosphoenolpyruvate = N(pros)-phospho-L-histidyl-[protein] + pyruvate. Its function is as follows. General (non sugar-specific) component of the phosphoenolpyruvate-dependent sugar phosphotransferase system (sugar PTS). This major carbohydrate active-transport system catalyzes the phosphorylation of incoming sugar substrates concomitantly with their translocation across the cell membrane. Enzyme I transfers the phosphoryl group from phosphoenolpyruvate (PEP) to the phosphoryl carrier protein (HPr). The chain is Phosphoenolpyruvate-protein phosphotransferase (ptsI) from Enterococcus faecalis (strain ATCC 700802 / V583).